Consider the following 357-residue polypeptide: Putative lipopolysaccharide heptosyltransferase 4 (357 aa).

The enzyme catalyses alpha-D-Glc-(1-&gt;2)-alpha-D-Glc-(1-&gt;3)-[alpha-D-Gal-(1-&gt;6)]-alpha-D-Glc-(1-&gt;3)-[L-alpha-D-Hep-(1-&gt;7)]-4-O-PO3(2-)-L-alpha-D-Hep-(1-&gt;3)-4-O-PO3(2-)-L-alpha-D-Hep-(1-&gt;5)-[alpha-Kdo-(2-&gt;4)]-alpha-Kdo-(2-&gt;6)-lipid A + ADP-L-glycero-beta-D-manno-heptose = lipid A-core + ADP + H(+). It functions in the pathway bacterial outer membrane biogenesis; LPS core biosynthesis. Functionally, transferase involved in the biosynthesis of the core oligosaccharide region of lipopolysaccharide (LPS). May catalyze the addition of the terminal heptose (heptose IV) to the outer-core glucose III, the last step of the lipid A-core oligosaccharide biosynthesis. The polypeptide is Putative lipopolysaccharide heptosyltransferase 4 (Escherichia coli (strain K12)).